We begin with the raw amino-acid sequence, 113 residues long: T cell receptor alpha variable 5 (113 aa).

The N-terminal stretch at 1–22 is a signal peptide; that stretch reads MKTFAGFSFLFLWLQLDCMSRG. Positions 23 to 113 constitute an Ig-like domain; that stretch reads EDVEQSLFLS…DSAIYFCAES (91 aa). Asn42 carries an N-linked (GlcNAc...) asparagine glycan. An intrachain disulfide couples Cys43 to Cys110.

In terms of assembly, alpha-beta TR is a heterodimer composed of an alpha and beta chain; disulfide-linked. The alpha-beta TR is associated with the transmembrane signaling CD3 coreceptor proteins to form the TR-CD3 (TcR or TCR). The assembly of alpha-beta TR heterodimers with CD3 occurs in the endoplasmic reticulum where a single alpha-beta TR heterodimer associates with one CD3D-CD3E heterodimer, one CD3G-CD3E heterodimer and one CD247 homodimer forming a stable octameric structure. CD3D-CD3E and CD3G-CD3E heterodimers preferentially associate with TR alpha and TR beta chains, respectively. The association of the CD247 homodimer is the last step of TcR assembly in the endoplasmic reticulum and is required for transport to the cell surface.

It is found in the cell membrane. Functionally, v region of the variable domain of T cell receptor (TR) alpha chain that participates in the antigen recognition. Alpha-beta T cell receptors are antigen specific receptors which are essential to the immune response and are present on the cell surface of T lymphocytes. Recognize peptide-major histocompatibility (MH) (pMH) complexes that are displayed by antigen presenting cells (APC), a prerequisite for efficient T cell adaptive immunity against pathogens. Binding of alpha-beta TR to pMH complex initiates TR-CD3 clustering on the cell surface and intracellular activation of LCK that phosphorylates the ITAM motifs of CD3G, CD3D, CD3E and CD247 enabling the recruitment of ZAP70. In turn ZAP70 phosphorylates LAT, which recruits numerous signaling molecules to form the LAT signalosome. The LAT signalosome propagates signal branching to three major signaling pathways, the calcium, the mitogen-activated protein kinase (MAPK) kinase and the nuclear factor NF-kappa-B (NF-kB) pathways, leading to the mobilization of transcription factors that are critical for gene expression and essential for T cell growth and differentiation. The T cell repertoire is generated in the thymus, by V-(D)-J rearrangement. This repertoire is then shaped by intrathymic selection events to generate a peripheral T cell pool of self-MH restricted, non-autoaggressive T cells. Post-thymic interaction of alpha-beta TR with the pMH complexes shapes TR structural and functional avidity. The sequence is that of T cell receptor alpha variable 5 from Homo sapiens (Human).